A 410-amino-acid polypeptide reads, in one-letter code: Peptidase T (410 aa).

Residue His-78 participates in Zn(2+) binding. Residue Asp-80 is part of the active site. A Zn(2+)-binding site is contributed by Asp-140. Glu-174 acts as the Proton acceptor in catalysis. Residues Glu-175, Asp-197, and His-379 each contribute to the Zn(2+) site.

It belongs to the peptidase M20B family. It depends on Zn(2+) as a cofactor.

Its subcellular location is the cytoplasm. It carries out the reaction Release of the N-terminal residue from a tripeptide.. In terms of biological role, cleaves the N-terminal amino acid of tripeptides. The protein is Peptidase T of Vibrio atlanticus (strain LGP32) (Vibrio splendidus (strain Mel32)).